The following is a 429-amino-acid chain: Ribosomal RNA small subunit methyltransferase B (429 aa).

S-adenosyl-L-methionine-binding positions include 254 to 260 (CAAPGGK), Asp277, Asp303, and Asp322. The Nucleophile role is filled by Cys375. Residues 397 to 419 (ALSETGTPDQPGQQNLPGGEEGD) form a disordered region. Residues 400 to 412 (ETGTPDQPGQQNL) show a composition bias toward polar residues.

This sequence belongs to the class I-like SAM-binding methyltransferase superfamily. RsmB/NOP family.

The protein resides in the cytoplasm. The enzyme catalyses cytidine(967) in 16S rRNA + S-adenosyl-L-methionine = 5-methylcytidine(967) in 16S rRNA + S-adenosyl-L-homocysteine + H(+). Functionally, specifically methylates the cytosine at position 967 (m5C967) of 16S rRNA. The sequence is that of Ribosomal RNA small subunit methyltransferase B from Salmonella heidelberg (strain SL476).